Here is a 175-residue protein sequence, read N- to C-terminus: Anterior gradient protein 2 homolog (175 aa).

Positions Met-1–Ala-20 are cleaved as a signal peptide. Positions Lys-21 to Leu-40 are required to promote cell adhesion. A disordered region spans residues Thr-24 to Leu-44. Residues Ala-29–Pro-38 are compositionally biased toward basic and acidic residues. 2 consecutive short sequence motifs (homodimer stabilization; interchain) follow at residues Ser-45 to Trp-54 and Glu-60 to Thr-67.

Belongs to the AGR family. In terms of assembly, monomer and homodimer. Interacts with LYPD3 and DAG1 (alphaDAG1). Interacts with MUC2; disulfide-linked. Expressed in lung, skeletal muscle, testis, liver, stomach, colon, small intestine, the goblet cells of the intestine and the mucuous neck cells of the stomach.

It localises to the secreted. Its subcellular location is the endoplasmic reticulum. Functionally, required for MUC2 post-transcriptional synthesis and secretion. May play a role in the production of mucus by intestinal cells. Proto-oncogene that may play a role in cell migration, cell differentiation and cell growth. Promotes cell adhesion. This Mus musculus (Mouse) protein is Anterior gradient protein 2 homolog (Agr2).